The following is a 259-amino-acid chain: AM-toxin biosynthesis protein 11 (259 aa).

The tract at residues 39–66 is disordered; that stretch reads RRSRRRPEEESIQSLSKHVSTTTQPCPT. Polar residues predominate over residues 50 to 64; it reads IQSLSKHVSTTTQPC.

Its pathway is mycotoxin biosynthesis. Functionally, part of the gene clusters that mediate the biosynthesis of AM-toxins, host-selective toxins (HSTs) causing Alternaria blotch on apple, a worldwide distributed disease. AM-toxins are cyclic depsipeptides containing the 3 residues 2-hydroxy-isovaleric acid (2-HIV), dehydroalanine, L-alanine which are common for all 3 AM-toxins I to III. The fourth precursor is L-alpha-amino-methoxyphenyl-valeric acid (L-Amv) for AM-toxin I, L-alpha-amino-phenyl-valeric acid (L-Apv) for AM-toxin II, and L-alpha-amino-hydroxyphenyl-valeric acid (L-Ahv) for AM-toxin III. AM-toxins have two target sites for affecting susceptible apple cells; they cause invagination of the plasma membrane and electrolyte loss and chloroplast disorganization. The non-ribosomal peptide synthetase AMT1 contains 4 catalytic modules and is responsible for activation of each residue in AM-toxin. The aldo-keto reductase AMT2 catalyzes the conversion of 2-keto-isovaleric acid (2-KIV) to 2-hydroxy-isovaleric acid (2-HIV), one of the precursor residues incorporated by AMT1 during AM-toxin biosynthesis, by reduction of its ketone to an alcohol. The cytochrome P450 monooxygenase AMT3 and the thioesterase AMT4 are also important for AM-toxin production, but their exact function within the AM-toxin biosynthesis are not known yet. Up to 21 proteins (including AMT1 to AMT4) are predicted to be involved in AM-toxin biosynthesis since their expression ishighly up-regulated in AM-toxin-producing cultures. This is AM-toxin biosynthesis protein 11 from Alternaria alternata (Alternaria rot fungus).